Consider the following 221-residue polypeptide: Esterase C25G4.2 (221 aa).

Catalysis depends on charge relay system residues S106, D166, and H194.

It belongs to the LovG family.

In Caenorhabditis elegans, this protein is Esterase C25G4.2.